The primary structure comprises 254 residues: Small ribosomal subunit protein uS2 (254 aa).

It belongs to the universal ribosomal protein uS2 family.

The sequence is that of Small ribosomal subunit protein uS2 from Borrelia recurrentis (strain A1).